Consider the following 102-residue polypeptide: Small ribosomal subunit protein uS10 (102 aa).

This sequence belongs to the universal ribosomal protein uS10 family. Part of the 30S ribosomal subunit.

Its function is as follows. Involved in the binding of tRNA to the ribosomes. This Methylobacillus flagellatus (strain ATCC 51484 / DSM 6875 / VKM B-1610 / KT) protein is Small ribosomal subunit protein uS10.